We begin with the raw amino-acid sequence, 88 residues long: Small ribosomal subunit protein uS17 (88 aa).

This sequence belongs to the universal ribosomal protein uS17 family. Part of the 30S ribosomal subunit.

Functionally, one of the primary rRNA binding proteins, it binds specifically to the 5'-end of 16S ribosomal RNA. The polypeptide is Small ribosomal subunit protein uS17 (Nitratidesulfovibrio vulgaris (strain DSM 19637 / Miyazaki F) (Desulfovibrio vulgaris)).